Here is a 250-residue protein sequence, read N- to C-terminus: Dihydroorotate dehydrogenase B (NAD(+)), electron transfer subunit (250 aa).

Residues M1 to L94 form the FAD-binding FR-type domain. Residues R45–S48, I62–R64, and G69–T70 contribute to the FAD site. The [2Fe-2S] cluster site is built by C214, C219, C222, and C237.

Belongs to the PyrK family. Heterotetramer of 2 PyrK and 2 PyrD type B subunits. [2Fe-2S] cluster serves as cofactor. It depends on FAD as a cofactor.

The protein operates within pyrimidine metabolism; UMP biosynthesis via de novo pathway; orotate from (S)-dihydroorotate (NAD(+) route): step 1/1. In terms of biological role, responsible for channeling the electrons from the oxidation of dihydroorotate from the FMN redox center in the PyrD type B subunit to the ultimate electron acceptor NAD(+). This chain is Dihydroorotate dehydrogenase B (NAD(+)), electron transfer subunit, found in Streptococcus pneumoniae serotype 4 (strain ATCC BAA-334 / TIGR4).